Reading from the N-terminus, the 268-residue chain is 4-hydroxy-tetrahydrodipicolinate reductase (268 aa).

NAD(+) contacts are provided by residues 10–15 (GSTGRM), Glu36, 99–101 (GTT), and 123–126 (APNM). His156 serves as the catalytic Proton donor/acceptor. His157 serves as a coordination point for (S)-2,3,4,5-tetrahydrodipicolinate. Lys160 (proton donor) is an active-site residue. 166–167 (GT) contributes to the (S)-2,3,4,5-tetrahydrodipicolinate binding site.

It belongs to the DapB family.

The protein localises to the cytoplasm. It catalyses the reaction (S)-2,3,4,5-tetrahydrodipicolinate + NAD(+) + H2O = (2S,4S)-4-hydroxy-2,3,4,5-tetrahydrodipicolinate + NADH + H(+). The catalysed reaction is (S)-2,3,4,5-tetrahydrodipicolinate + NADP(+) + H2O = (2S,4S)-4-hydroxy-2,3,4,5-tetrahydrodipicolinate + NADPH + H(+). The protein operates within amino-acid biosynthesis; L-lysine biosynthesis via DAP pathway; (S)-tetrahydrodipicolinate from L-aspartate: step 4/4. Catalyzes the conversion of 4-hydroxy-tetrahydrodipicolinate (HTPA) to tetrahydrodipicolinate. The polypeptide is 4-hydroxy-tetrahydrodipicolinate reductase (Nitrosomonas eutropha (strain DSM 101675 / C91 / Nm57)).